A 366-amino-acid polypeptide reads, in one-letter code: Carbamoyl phosphate synthase small chain (366 aa).

Positions 1 to 168 (MYGILVLEDG…KETVVYSADD (168 aa)) are CPSase. Residues Ser45, Gly220, and Gly222 each contribute to the L-glutamine site. Residues 172–363 (KCVLIDCGVK…VELGIKFKAE (192 aa)) form the Glutamine amidotransferase type-1 domain. The active-site Nucleophile is the Cys247. 5 residues coordinate L-glutamine: Leu248, Gln251, Asn289, Gly291, and Phe292. Catalysis depends on residues His336 and Glu338.

This sequence belongs to the CarA family. As to quaternary structure, composed of two chains; the small (or glutamine) chain promotes the hydrolysis of glutamine to ammonia, which is used by the large (or ammonia) chain to synthesize carbamoyl phosphate. Tetramer of heterodimers (alpha,beta)4.

It catalyses the reaction hydrogencarbonate + L-glutamine + 2 ATP + H2O = carbamoyl phosphate + L-glutamate + 2 ADP + phosphate + 2 H(+). It carries out the reaction L-glutamine + H2O = L-glutamate + NH4(+). The protein operates within amino-acid biosynthesis; L-arginine biosynthesis; carbamoyl phosphate from bicarbonate: step 1/1. It functions in the pathway pyrimidine metabolism; UMP biosynthesis via de novo pathway; (S)-dihydroorotate from bicarbonate: step 1/3. Small subunit of the glutamine-dependent carbamoyl phosphate synthetase (CPSase). CPSase catalyzes the formation of carbamoyl phosphate from the ammonia moiety of glutamine, carbonate, and phosphate donated by ATP, constituting the first step of 2 biosynthetic pathways, one leading to arginine and/or urea and the other to pyrimidine nucleotides. The small subunit (glutamine amidotransferase) binds and cleaves glutamine to supply the large subunit with the substrate ammonia. In Methanococcus maripaludis (strain C6 / ATCC BAA-1332), this protein is Carbamoyl phosphate synthase small chain.